A 419-amino-acid chain; its full sequence is Pygopus homolog 1 (419 aa).

2 disordered regions span residues 1 to 64 (MPAE…PNSD) and 175 to 338 (HFRQ…SSSD). Over residues 18–30 (GDSGLDGLGGPGV) the composition is skewed to gly residues. The short motif at 35–41 (PDKKKRK) is the Nuclear localization signal element. Polar residues-rich tracts occupy residues 175-221 (HFRQ…SNHS) and 240-255 (DFTQ…NSSA). Positions 276 to 286 (VNRNNAVNQEN) are enriched in low complexity. Over residues 287 to 307 (SRSSSTEATNNNPANGTQNKP) the composition is skewed to polar residues. The PHD-type zinc finger occupies 340–398 (VYPCGICTNEVNDDQDAILCEASCQKWFHRICTGMTETAYGLLTAEASAVWGCDTCMAD). The interval 341 to 388 (YPCGICTNEVNDDQDAILCEASCQKWFHRICTGMTETAYGLLTAEASA) is interaction with H3K4me2. The interval 373-391 (GMTETAYGLLTAEASAVWG) is interaction with BCL9.

Interacts with BCL9 via The PHD-type zinc finger motiv, and thereby becomes part of the nuclear beta-catenin/TCF complex. Identified in a complex with BCL9L, CDC73, CTNNB1 and PYGO1. Interacts with histone H3 mono-, di- or tri-methylated at 'Lys4' (H3K4me1, H3K4me2, H3K4me3); the interaction is enhanced by the interaction with BCL9.

The protein resides in the nucleus. Involved in signal transduction through the Wnt pathway. This Homo sapiens (Human) protein is Pygopus homolog 1 (PYGO1).